A 351-amino-acid chain; its full sequence is Fe(3+) ions import ATP-binding protein FbpC (351 aa).

The region spanning Val-7–Met-237 is the ABC transporter domain. Gly-39–Thr-46 is a binding site for ATP.

The protein belongs to the ABC transporter superfamily. Fe(3+) ion importer (TC 3.A.1.10) family. In terms of assembly, the complex is composed of two ATP-binding proteins (FbpC), two transmembrane proteins (FbpB) and a solute-binding protein (FbpA).

Its subcellular location is the cell inner membrane. It carries out the reaction Fe(3+)(out) + ATP + H2O = Fe(3+)(in) + ADP + phosphate + H(+). Part of the ABC transporter complex FbpABC involved in Fe(3+) ions import. Responsible for energy coupling to the transport system. The chain is Fe(3+) ions import ATP-binding protein FbpC from Photobacterium profundum (strain SS9).